Consider the following 79-residue polypeptide: Aquaporin Z (79 aa).

The next 2 membrane-spanning stretches (helical) occupy residues 4-24 (LFAE…SAVF) and 33-53 (IGFA…AYAV). The short motif at 62–64 (NPA) is the NPA 1 element.

This sequence belongs to the MIP/aquaporin (TC 1.A.8) family. Homotetramer.

It localises to the cell membrane. It carries out the reaction H2O(in) = H2O(out). In terms of biological role, channel that permits osmotically driven movement of water in both directions. It is involved in the osmoregulation and in the maintenance of cell turgor during volume expansion in rapidly growing cells. It mediates rapid entry or exit of water in response to abrupt changes in osmolarity. This is Aquaporin Z from Flavobacterium johnsoniae (Cytophaga johnsonae).